The sequence spans 1164 residues: MPTMRRTVSEIRSRAEGYEKTDDVSEKTSLADQEEVRTIFINQPQLTKFCNNHVSTAKYNVITFLPRFLYSQFRRAANSFFLFIALLQQIPDVSPTGRYTTLVPLLFILAVAAIKEIIEDIKRHKADNAVNKKQTQVLRNGAWEIVHWEKVAVGEIVKVTNGEHLPADLLSLSSSEPQAMCYIETSNLDGETNLKIRQGLPATSDIKDIDSLMRISGRIECESPNRHLYDFVGNIRLDGHGTVPLGADQILLRGAQLRNTQWVHGIVVYTGHDTKLMQNSTSPPLKLSNVERITNVQILILFCILIAMSLVCSVGSAIWNRRHSGKDWYLHLHYGGASNFGLNFLTFIILFNNLIPISLLVTLEVVKFTQAYFINWDLDMHYEPTDTAAMARTSNLNEELGQVKYIFSDKTGTLTCNVMQFKKCTIAGVAYGHVPEPEDYGCSPDEWQSSQFGDEKTFNDPSLLDNLQNNHPTAPIICEFLTMMAVCHTAVPEREGDKIIYQAASPDEGALVRAAKQLNFVFTGRTPDSVIIDSLGQEERYELLNVLEFTSARKRMSVVVRTPSGKLRLYCKGADTVIYERLAETSKYKEITLKHLEQFATEGLRTLCFAVAEISESDFEEWRAVYHRASTSVQNRLLKLEESYELIEKNLQLLGATAIEDKLQDQVPETIETLMKADIKIWILTGDKQETAINIGHSCRLLKRNMGMIVINEGSLDGTRETLSRHCTTLGDALRKENDFALIIDGKTLKYALTFGVRQYFLDLALSCKAVICCRVSPLQKSEVVEMVKKQVKVITLAIGDGANDVSMIQTAHVGVGISGNEGLQAANSSDYSIAQFKYLKNLLMVHGAWNYNRVSKCILYCFYKNIVLYIIEIWFAFVNGFSGQILFERWCIGLYNVMFTAMPPLTLGIFERSCRKENMLKYPELYKTSQNALDFNTKVFWVHCLNGLFHSVILFWFPLKALQYGTVFGNGKTSDYLLLGNFVYTFVVITVCLKAGLETSYWTWFSHIAIWGSIALWVVFFGIYSSLWPAVPMAPDMSGEAAMLFSSGVFWVGLLSIPVASLLLDVLYKVIKRTAFKTLVDEVQELEAKSQDPGAVVLGKSLTERAQLLKNVFKKNHVNLYRSESLQQNLLHGYAFSQDENGIVSQSEVIRAYDTTKQRPDEW.

Over 1-75 the chain is Cytoplasmic; that stretch reads MPTMRRTVSE…PRFLYSQFRR (75 aa). Ser-25 carries the phosphoserine modification. A Phosphothreonine modification is found at Thr-28. Ser-29 bears the Phosphoserine mark. Residues 76–96 form a helical membrane-spanning segment; it reads AANSFFLFIALLQQIPDVSPT. Topologically, residues 97 to 100 are exoplasmic loop; it reads GRYT. Residues 101 to 121 traverse the membrane as a helical segment; it reads TLVPLLFILAVAAIKEIIEDI. Residues 122-297 lie on the Cytoplasmic side of the membrane; the sequence is KRHKADNAVN…SNVERITNVQ (176 aa). The chain crosses the membrane as a helical span at residues 298–318; it reads ILILFCILIAMSLVCSVGSAI. The Exoplasmic loop portion of the chain corresponds to 319 to 339; it reads WNRRHSGKDWYLHLHYGGASN. A helical transmembrane segment spans residues 340–360; that stretch reads FGLNFLTFIILFNNLIPISLL. The Cytoplasmic segment spans residues 361–866; sequence VTLEVVKFTQ…KCILYCFYKN (506 aa). The active-site 4-aspartylphosphate intermediate is the Asp-409. Residues Asp-409, Lys-410, and Thr-411 each contribute to the ATP site. Asp-409 provides a ligand contact to Mg(2+). Residue Thr-411 coordinates Mg(2+). The residue at position 443 (Ser-443) is a Phosphoserine. Residues Glu-508, Phe-549, Lys-572, Arg-605, Thr-685, Gly-686, Asp-687, 741–748, Arg-775, and Lys-781 contribute to the ATP site; that span reads ALIIDGKT. Residue Asp-801 participates in Mg(2+) binding. The ATP site is built by Asn-804 and Asp-805. Asp-805 lines the Mg(2+) pocket. Residues 867-887 form a helical membrane-spanning segment; sequence IVLYIIEIWFAFVNGFSGQIL. The Exoplasmic loop portion of the chain corresponds to 888 to 890; it reads FER. Residues 891–911 form a helical membrane-spanning segment; it reads WCIGLYNVMFTAMPPLTLGIF. Residues 912-939 lie on the Cytoplasmic side of the membrane; it reads ERSCRKENMLKYPELYKTSQNALDFNTK. The chain crosses the membrane as a helical span at residues 940-960; it reads VFWVHCLNGLFHSVILFWFPL. Over 961-977 the chain is Exoplasmic loop; that stretch reads KALQYGTVFGNGKTSDY. A helical membrane pass occupies residues 978 to 998; the sequence is LLLGNFVYTFVVITVCLKAGL. Residues 999 to 1008 are Cytoplasmic-facing; it reads ETSYWTWFSH. The chain crosses the membrane as a helical span at residues 1009–1029; that stretch reads IAIWGSIALWVVFFGIYSSLW. The Exoplasmic loop segment spans residues 1030 to 1044; it reads PAVPMAPDMSGEAAM. The helical transmembrane segment at 1045–1065 threads the bilayer; it reads LFSSGVFWVGLLSIPVASLLL. Residues 1066–1164 lie on the Cytoplasmic side of the membrane; sequence DVLYKVIKRT…DTTKQRPDEW (99 aa). 1095 to 1102 serves as a coordination point for ATP; it reads GAVVLGKS. Ser-1126 is subject to Phosphoserine.

The protein belongs to the cation transport ATPase (P-type) (TC 3.A.3) family. Type IV subfamily. In terms of assembly, component of a P4-ATPase flippase complex which consists of a catalytic alpha subunit and an accessory beta subunit. Interacts with TMEM30A to form a flippase complex; this complex forms an intermediate phosphoenzyme. Interacts with TMEM30B; this interaction is reported conflictingly. Mg(2+) is required as a cofactor. Post-translationally, cleaved by calpain in a caspase- and calcium influx-dependent manner only during platelet apoptosis and may lead to inactivation. As to expression, found in most tissues except liver and testis. Most abundant in brain and lung. Also detected in fetal tissues. Isoform 1 is expressed in brain. Isoform 2 and isoform 3 are expressed in reticulocytes. Expressed in mouse hippocampus in both dentate gyrus (DG) and the CA3 regions. Expressed in both neuronal as well as non-neuronal cells within the DG. Highly expressed in platelets.

It localises to the cytoplasmic vesicle. The protein localises to the secretory vesicle. It is found in the chromaffin granule membrane. The protein resides in the cytoplasmic granule. Its subcellular location is the cell membrane. It localises to the endoplasmic reticulum. The protein localises to the golgi apparatus. It is found in the endomembrane system. It catalyses the reaction ATP + H2O + phospholipidSide 1 = ADP + phosphate + phospholipidSide 2.. The catalysed reaction is a 1,2-diacyl-sn-glycero-3-phospho-L-serine(out) + ATP + H2O = a 1,2-diacyl-sn-glycero-3-phospho-L-serine(in) + ADP + phosphate + H(+). With respect to regulation, ATPase activity is stimulated by phosphatidylserine (PS) and minimally by phosphatidylethanolamine (PE). ATPase activity is inhibited by the vanadate and by the presence of calcium. Its function is as follows. Catalytic component of a P4-ATPase flippase complex which catalyzes the hydrolysis of ATP coupled to the transport of aminophospholipids from the outer to the inner leaflet of various membranes and ensures the maintenance of asymmetric distribution of phospholipids. Phospholipid translocation also seems to be implicated in vesicle formation and in uptake of lipid signaling molecules. In vitro, its ATPase activity is selectively and stereospecifically stimulated by phosphatidylserine (PS). The flippase complex ATP8A1:TMEM30A seems to play a role in regulation of cell migration probably involving flippase-mediated translocation of phosphatidylethanolamine (PE) at the cell membrane. Acts as aminophospholipid translocase at the cell membrane in neuronal cells; the activity is associated with hippocampus-dependent learning. May play a role in brain connectivity. The polypeptide is Phospholipid-transporting ATPase IA (Mus musculus (Mouse)).